The primary structure comprises 190 residues: N-alpha-acetyltransferase MAK3 (190 aa).

Positions 16-164 (IEYTSYAGEH…DAFRLKLLFP (149 aa)) constitute an N-acetyltransferase domain.

The protein belongs to the acetyltransferase family. MAK3 subfamily. As to expression, expressed in roots, leaves, flowers and siliques.

It localises to the cytoplasm. The catalysed reaction is N-terminal L-methionyl-L-leucyl-[protein] + acetyl-CoA = N-terminal N(alpha)-acetyl-L-methionyl-L-leucyl-[protein] + CoA + H(+). It catalyses the reaction N-terminal L-methionyl-L-isoleucyl-[protein] + acetyl-CoA = N-terminal N(alpha)-acetyl-L-methionyl-L-isoleucyl-[protein] + CoA + H(+). The enzyme catalyses N-terminal L-methionyl-L-phenylalanyl-[protein] + acetyl-CoA = N-terminal N(alpha)-acetyl-L-methionyl-L-phenylalanyl-[protein] + CoA + H(+). It carries out the reaction N-terminal L-methionyl-L-tryptophyl-[protein] + acetyl-CoA = N-terminal N(alpha)-acetyl-L-methionyl-L-tryptophyl-[protein] + CoA + H(+). The catalysed reaction is N-terminal L-methionyl-L-tyrosyl-[protein] + acetyl-CoA = N-terminal N(alpha)-acetyl-L-methionyl-L-tyrosyl-[protein] + CoA + H(+). Functionally, probably required for N-acetylation of some chloroplast precursor proteins and efficient accumulation of thylakoid multiprotein complexes. In yeast, can replace the NatC complex (composed of MAK3, MAK10 and MAK31) by acetylating N termini of endogenous proteins and the N-terminus Met of L-A virus Gag protein. However, the formation of a NatC complex is not required for this function. This chain is N-alpha-acetyltransferase MAK3 (MAK3), found in Arabidopsis thaliana (Mouse-ear cress).